We begin with the raw amino-acid sequence, 536 residues long: Inactive phospholipase D5 (536 aa).

A helical membrane pass occupies residues 69–89 (IVIFALVCCFAILVALIFSAV). The N-linked (GlcNAc...) asparagine glycan is linked to N121. The 28-residue stretch at 215 to 242 (NKGRLQSSFWIVDKQHVYIGSAGLDWQS) folds into the PLD phosphodiesterase 1 domain. N302 carries N-linked (GlcNAc...) asparagine glycosylation. Positions 434 to 460 (FPRLNRNKYMVTDGAAYIGNFDWVGND) constitute a PLD phosphodiesterase 2 domain.

Belongs to the phospholipase D family.

The protein resides in the membrane. The polypeptide is Inactive phospholipase D5 (PLD5) (Homo sapiens (Human)).